The following is a 321-amino-acid chain: Porphobilinogen deaminase (321 aa).

Position 243 is an S-(dipyrrolylmethanemethyl)cysteine (C243).

It belongs to the HMBS family. As to quaternary structure, monomer. Dipyrromethane serves as cofactor.

The catalysed reaction is 4 porphobilinogen + H2O = hydroxymethylbilane + 4 NH4(+). It functions in the pathway porphyrin-containing compound metabolism; protoporphyrin-IX biosynthesis; coproporphyrinogen-III from 5-aminolevulinate: step 2/4. Tetrapolymerization of the monopyrrole PBG into the hydroxymethylbilane pre-uroporphyrinogen in several discrete steps. The chain is Porphobilinogen deaminase from Histophilus somni (strain 129Pt) (Haemophilus somnus).